The sequence spans 136 residues: Large ribosomal subunit protein uL16c (136 aa).

The interval 1–20 (MLSPKRTRFRKQHRGRMKGK) is disordered.

It belongs to the universal ribosomal protein uL16 family. Part of the 50S ribosomal subunit.

The protein resides in the plastid. The protein localises to the chloroplast. The protein is Large ribosomal subunit protein uL16c of Triticum aestivum (Wheat).